We begin with the raw amino-acid sequence, 215 residues long: V-type ATP synthase subunit D (215 aa).

Belongs to the V-ATPase D subunit family.

Functionally, produces ATP from ADP in the presence of a proton gradient across the membrane. The polypeptide is V-type ATP synthase subunit D (Anaeromyxobacter sp. (strain Fw109-5)).